Here is a 1088-residue protein sequence, read N- to C-terminus: ATP-dependent helicase/deoxyribonuclease subunit B (1088 aa).

The protein belongs to the helicase family. AddB/RexB type 2 subfamily. As to quaternary structure, heterodimer of AddA and RexB. Mg(2+) is required as a cofactor.

The heterodimer acts as both an ATP-dependent DNA helicase and an ATP-dependent, dual-direction single-stranded exonuclease. Recognizes the chi site generating a DNA molecule suitable for the initiation of homologous recombination. This subunit has 5' -&gt; 3' nuclease activity but not helicase activity. This chain is ATP-dependent helicase/deoxyribonuclease subunit B, found in Streptococcus suis (strain 98HAH33).